A 288-amino-acid polypeptide reads, in one-letter code: Dysbindin protein homolog (288 aa).

Positions 147-239 (AQLQNSSQVL…QRERQAVFDD (93 aa)) form a coiled coil.

The protein belongs to the dysbindin family. Component of the biogenesis of lysosome-related organelles complex-1 (BLOC-1) composed of Blos1, Blos2, Blos3, Blos4, Dysb, Muted, Pldn and Snapin. Interacts with Pldn and Snapin.

In terms of biological role, component of the biogenesis of lysosome-related organelles complex-1 (BLOC-1) involved in pigment granule biogenesis and membrane trafficking in synapses. In response to high synaptic activity at neuromuscular junctions, stabilizes Pldn protein levels and, together with Pldn, plays a role in promoting efficient synaptic vesicle recycling and re-formation through early endosomes. The protein is Dysbindin protein homolog of Drosophila melanogaster (Fruit fly).